Consider the following 104-residue polypeptide: Ribonuclease P protein component 4 (104 aa).

Residues Cys-63, Cys-66, Cys-89, and Cys-92 each contribute to the Zn(2+) site.

Belongs to the eukaryotic/archaeal RNase P protein component 4 family. Consists of a catalytic RNA component and at least 4-5 protein subunits. Zn(2+) serves as cofactor.

It is found in the cytoplasm. The enzyme catalyses Endonucleolytic cleavage of RNA, removing 5'-extranucleotides from tRNA precursor.. Functionally, part of ribonuclease P, a protein complex that generates mature tRNA molecules by cleaving their 5'-ends. This is Ribonuclease P protein component 4 from Methanoregula boonei (strain DSM 21154 / JCM 14090 / 6A8).